Consider the following 429-residue polypeptide: Histidine--tRNA ligase (429 aa).

Belongs to the class-II aminoacyl-tRNA synthetase family. In terms of assembly, homodimer.

It is found in the cytoplasm. The enzyme catalyses tRNA(His) + L-histidine + ATP = L-histidyl-tRNA(His) + AMP + diphosphate + H(+). This is Histidine--tRNA ligase from Chlorobium phaeobacteroides (strain DSM 266 / SMG 266 / 2430).